Reading from the N-terminus, the 245-residue chain is Orotidine 5'-phosphate decarboxylase (245 aa).

Substrate-binding positions include D22, K44, 71–80 (DLKFHDIPNT), T131, R192, Q201, G221, and R222. The Proton donor role is filled by K73.

Belongs to the OMP decarboxylase family. Type 1 subfamily. In terms of assembly, homodimer.

The catalysed reaction is orotidine 5'-phosphate + H(+) = UMP + CO2. The protein operates within pyrimidine metabolism; UMP biosynthesis via de novo pathway; UMP from orotate: step 2/2. In terms of biological role, catalyzes the decarboxylation of orotidine 5'-monophosphate (OMP) to uridine 5'-monophosphate (UMP). In Escherichia coli (strain 55989 / EAEC), this protein is Orotidine 5'-phosphate decarboxylase.